The chain runs to 480 residues: Glutamate--tRNA ligase (480 aa).

The 'HIGH' region motif lies at 21-31; that stretch reads PSPTGYLHVGG. The Zn(2+) site is built by Cys-110, Cys-112, Cys-137, and His-139. The 'KMSKS' region signature appears at 248 to 252; it reads KLSKR. Position 251 (Lys-251) interacts with ATP.

The protein belongs to the class-I aminoacyl-tRNA synthetase family. Glutamate--tRNA ligase type 1 subfamily. As to quaternary structure, monomer. Requires Zn(2+) as cofactor.

The protein localises to the cytoplasm. It catalyses the reaction tRNA(Glu) + L-glutamate + ATP = L-glutamyl-tRNA(Glu) + AMP + diphosphate. Catalyzes the attachment of glutamate to tRNA(Glu) in a two-step reaction: glutamate is first activated by ATP to form Glu-AMP and then transferred to the acceptor end of tRNA(Glu). In Haemophilus influenzae (strain ATCC 51907 / DSM 11121 / KW20 / Rd), this protein is Glutamate--tRNA ligase.